The chain runs to 173 residues: NADH-ubiquinone oxidoreductase chain 6 (173 aa).

The next 5 membrane-spanning stretches (helical) occupy residues 1-21, 25-45, 53-73, 87-107, and 141-161; these read MTYFMFLLLMALVVGLVAVAS, PYFAALGLVVAAGVGCGVLVG, LVLFLIYLGGMLVVFAYSAAL, VLGYVLVYLLGVGLVAGFFWG, and GGMLVICAWVLLLTLLVVLEL.

It belongs to the complex I subunit 6 family.

The protein localises to the mitochondrion membrane. It catalyses the reaction a ubiquinone + NADH + 5 H(+)(in) = a ubiquinol + NAD(+) + 4 H(+)(out). In terms of biological role, core subunit of the mitochondrial membrane respiratory chain NADH dehydrogenase (Complex I) that is believed to belong to the minimal assembly required for catalysis. Complex I functions in the transfer of electrons from NADH to the respiratory chain. The immediate electron acceptor for the enzyme is believed to be ubiquinone. The chain is NADH-ubiquinone oxidoreductase chain 6 (MT-ND6) from Carassius auratus (Goldfish).